Reading from the N-terminus, the 182-residue chain is Adenine phosphoribosyltransferase 4 (182 aa).

Belongs to the purine/pyrimidine phosphoribosyltransferase family. In terms of assembly, homodimer.

The protein localises to the cytoplasm. It catalyses the reaction AMP + diphosphate = 5-phospho-alpha-D-ribose 1-diphosphate + adenine. The protein operates within purine metabolism; AMP biosynthesis via salvage pathway; AMP from adenine: step 1/1. In terms of biological role, catalyzes a salvage reaction resulting in the formation of AMP, that is energically less costly than de novo synthesis. May contribute to the recycling of adenine into adenylate nucleotides and the inactivation of cytokinins by phosphoribosylation. Possesses low activity toward adenine, but can efficiently convert cytokinins from free bases (active form) to the corresponding nucleotides (inactive form). The protein is Adenine phosphoribosyltransferase 4 (APT4) of Arabidopsis thaliana (Mouse-ear cress).